The sequence spans 472 residues: 3-isopropylmalate dehydratase large subunit (472 aa).

Positions 347, 407, and 410 each coordinate [4Fe-4S] cluster.

The protein belongs to the aconitase/IPM isomerase family. LeuC type 1 subfamily. Heterodimer of LeuC and LeuD. [4Fe-4S] cluster is required as a cofactor.

The enzyme catalyses (2R,3S)-3-isopropylmalate = (2S)-2-isopropylmalate. Its pathway is amino-acid biosynthesis; L-leucine biosynthesis; L-leucine from 3-methyl-2-oxobutanoate: step 2/4. Functionally, catalyzes the isomerization between 2-isopropylmalate and 3-isopropylmalate, via the formation of 2-isopropylmaleate. This chain is 3-isopropylmalate dehydratase large subunit, found in Bacillus velezensis (strain DSM 23117 / BGSC 10A6 / LMG 26770 / FZB42) (Bacillus amyloliquefaciens subsp. plantarum).